The sequence spans 327 residues: Zinc transport protein ZntB (327 aa).

Topologically, residues 1–273 are cytoplasmic; that stretch reads MEAIKGSDVN…ARRTYTMSLM (273 aa). The chain crosses the membrane as a helical span at residues 274-294; it reads AMVFLPSTFLTGLFGVNLGGI. At 295 to 300 the chain is on the periplasmic side; the sequence is PGGGWQ. The helical transmembrane segment at 301-321 threads the bilayer; it reads FGFSIFCILLVVLIGGVALWL. Over 322–327 the chain is Cytoplasmic; sequence HRSKWL.

The protein belongs to the CorA metal ion transporter (MIT) (TC 1.A.35) family.

It localises to the cell inner membrane. The enzyme catalyses Zn(2+)(out) + H(+)(out) = Zn(2+)(in) + H(+)(in). Zinc transporter. Acts as a Zn(2+):proton symporter, which likely mediates zinc ion uptake. In Escherichia coli O6:K15:H31 (strain 536 / UPEC), this protein is Zinc transport protein ZntB.